Consider the following 435-residue polypeptide: Serine--tRNA ligase (435 aa).

233–235 serves as a coordination point for L-serine; sequence TAE. Residue 264–266 coordinates ATP; the sequence is RAE. Residue glutamate 287 participates in L-serine binding. An ATP-binding site is contributed by 351 to 354; that stretch reads EISS. Serine 386 is a binding site for L-serine.

This sequence belongs to the class-II aminoacyl-tRNA synthetase family. Type-1 seryl-tRNA synthetase subfamily. As to quaternary structure, homodimer. The tRNA molecule binds across the dimer.

The protein resides in the cytoplasm. It catalyses the reaction tRNA(Ser) + L-serine + ATP = L-seryl-tRNA(Ser) + AMP + diphosphate + H(+). It carries out the reaction tRNA(Sec) + L-serine + ATP = L-seryl-tRNA(Sec) + AMP + diphosphate + H(+). The protein operates within aminoacyl-tRNA biosynthesis; selenocysteinyl-tRNA(Sec) biosynthesis; L-seryl-tRNA(Sec) from L-serine and tRNA(Sec): step 1/1. Catalyzes the attachment of serine to tRNA(Ser). Is also able to aminoacylate tRNA(Sec) with serine, to form the misacylated tRNA L-seryl-tRNA(Sec), which will be further converted into selenocysteinyl-tRNA(Sec). This chain is Serine--tRNA ligase, found in Anaeromyxobacter sp. (strain K).